A 452-amino-acid polypeptide reads, in one-letter code: Phosphoglucosamine mutase (452 aa).

Catalysis depends on S112, which acts as the Phosphoserine intermediate. Mg(2+) is bound by residues S112, D251, D253, and D255. The residue at position 112 (S112) is a Phosphoserine.

This sequence belongs to the phosphohexose mutase family. Requires Mg(2+) as cofactor. Activated by phosphorylation.

The catalysed reaction is alpha-D-glucosamine 1-phosphate = D-glucosamine 6-phosphate. In terms of biological role, catalyzes the conversion of glucosamine-6-phosphate to glucosamine-1-phosphate. This Bordetella pertussis (strain Tohama I / ATCC BAA-589 / NCTC 13251) protein is Phosphoglucosamine mutase.